The following is a 362-amino-acid chain: Cobalt-precorrin-5B C(1)-methyltransferase (362 aa).

The protein belongs to the CbiD family.

The catalysed reaction is Co-precorrin-5B + S-adenosyl-L-methionine = Co-precorrin-6A + S-adenosyl-L-homocysteine. It functions in the pathway cofactor biosynthesis; adenosylcobalamin biosynthesis; cob(II)yrinate a,c-diamide from sirohydrochlorin (anaerobic route): step 6/10. Catalyzes the methylation of C-1 in cobalt-precorrin-5B to form cobalt-precorrin-6A. In Burkholderia cenocepacia (strain ATCC BAA-245 / DSM 16553 / LMG 16656 / NCTC 13227 / J2315 / CF5610) (Burkholderia cepacia (strain J2315)), this protein is Cobalt-precorrin-5B C(1)-methyltransferase.